A 437-amino-acid polypeptide reads, in one-letter code: Chromosomal replication initiator protein DnaA (437 aa).

Residues M1–I69 form a domain I, interacts with DnaA modulators region. Residues I69–T100 are domain II. The interval I101 to A315 is domain III, AAA+ region. Residues G145, G147, K148, and T149 each coordinate ATP. The segment at N316 to N437 is domain IV, binds dsDNA.

This sequence belongs to the DnaA family. As to quaternary structure, oligomerizes as a right-handed, spiral filament on DNA at oriC.

The protein localises to the cytoplasm. Functionally, plays an essential role in the initiation and regulation of chromosomal replication. ATP-DnaA binds to the origin of replication (oriC) to initiate formation of the DNA replication initiation complex once per cell cycle. Binds the DnaA box (a 9 base pair repeat at the origin) and separates the double-stranded (ds)DNA. Forms a right-handed helical filament on oriC DNA; dsDNA binds to the exterior of the filament while single-stranded (ss)DNA is stabiized in the filament's interior. The ATP-DnaA-oriC complex binds and stabilizes one strand of the AT-rich DNA unwinding element (DUE), permitting loading of DNA polymerase. After initiation quickly degrades to an ADP-DnaA complex that is not apt for DNA replication. Binds acidic phospholipids. This Wolinella succinogenes (strain ATCC 29543 / DSM 1740 / CCUG 13145 / JCM 31913 / LMG 7466 / NCTC 11488 / FDC 602W) (Vibrio succinogenes) protein is Chromosomal replication initiator protein DnaA.